A 298-amino-acid polypeptide reads, in one-letter code: Ribosomal RNA small subunit methyltransferase A (298 aa).

Residues Asn35, Leu37, Gly62, Glu83, Asp108, and Asn133 each coordinate S-adenosyl-L-methionine.

This sequence belongs to the class I-like SAM-binding methyltransferase superfamily. rRNA adenine N(6)-methyltransferase family. RsmA subfamily.

The protein resides in the cytoplasm. The enzyme catalyses adenosine(1518)/adenosine(1519) in 16S rRNA + 4 S-adenosyl-L-methionine = N(6)-dimethyladenosine(1518)/N(6)-dimethyladenosine(1519) in 16S rRNA + 4 S-adenosyl-L-homocysteine + 4 H(+). Its function is as follows. Specifically dimethylates two adjacent adenosines (A1518 and A1519) in the loop of a conserved hairpin near the 3'-end of 16S rRNA in the 30S particle. May play a critical role in biogenesis of 30S subunits. The polypeptide is Ribosomal RNA small subunit methyltransferase A (Streptococcus pyogenes serotype M4 (strain MGAS10750)).